The chain runs to 895 residues: Endochitinase 2 (895 aa).

The signal sequence occupies residues 1–22 (MGLTNILAAFIAVSSLFIQSLA). The 312-residue stretch at 29-340 (SNLAVYWGQG…DIMKEVLLRC (312 aa)) folds into the GH18 domain. N-linked (GlcNAc...) asparagine glycosylation is present at asparagine 90. Residue glutamate 175 is the Proton donor of the active site. A disordered region spans residues 343–712 (DPPTSTVTST…APSSSTTEDR (370 aa)). Positions 346–425 (TSTVTSTISA…ISTRSASTET (80 aa)) are enriched in low complexity. Polar residues predominate over residues 426 to 478 (VTTRSQEPPSTTISTRPASTETVTTRSQEPPSSTISTRSASTETVTTRSQEPP). Over residues 479–505 (SSTISTRSASTETSTSSQDSPSTTIST) the composition is skewed to low complexity. Residues 506-543 (KSAPTGTVTTRSQDLPSTTISTRSPETETETVTTKSQD) are compositionally biased toward polar residues. The span at 544–555 (SPSITLSTRSSS) shows a compositional bias: low complexity. Polar residues predominate over residues 556–577 (AETVSTRSQHSSSTTISTKSAP). The span at 578–589 (TETGTTSEHSTS) shows a compositional bias: low complexity. Polar residues predominate over residues 590–657 (MPVSTRSAST…ISTELPSQTH (68 aa)). 2 stretches are compositionally biased toward low complexity: residues 658–692 (STTD…APTT) and 699–712 (TLTL…TEDR). Residue glycine 866 is the site of GPI-anchor amidated glycine attachment. The propeptide at 867 to 895 (GAMTVRSMDVVAKALITAGAAVLGLFLGL) is removed in mature form.

It belongs to the glycosyl hydrolase 18 family. Chitinase class III subfamily.

It is found in the cell membrane. It catalyses the reaction Random endo-hydrolysis of N-acetyl-beta-D-glucosaminide (1-&gt;4)-beta-linkages in chitin and chitodextrins.. May be associated with endosporulation. The sequence is that of Endochitinase 2 (CTS2) from Coccidioides immitis (strain RS) (Valley fever fungus).